A 288-amino-acid polypeptide reads, in one-letter code: Ninja-family protein 6 (288 aa).

2 disordered regions span residues 1 to 50 and 66 to 207; these read MASR…KRPR and LHAD…TRTG. A compositionally biased stretch (gly residues) spans 12 to 23; sequence AGEGAGPPGDAG. Over residues 76 to 86 the composition is skewed to low complexity; it reads LPLLRTTSLPT. Positions 91-103 are enriched in basic and acidic residues; it reads ERWRRREMQSRRR. A compositionally biased stretch (polar residues) spans 131–173; that stretch reads RRSNASQGSNSASTTEQGIGGSMFNQSADAKSPSTSDNRNQND. Low complexity predominate over residues 195 to 207; that stretch reads RLRTLGSLTTRTG.

This sequence belongs to the Ninja family.

Its subcellular location is the nucleus. This Zea mays (Maize) protein is Ninja-family protein 6.